Consider the following 117-residue polypeptide: Large ribosomal subunit protein bL17 (117 aa).

The protein belongs to the bacterial ribosomal protein bL17 family. In terms of assembly, part of the 50S ribosomal subunit. Contacts protein L32.

This Campylobacter jejuni subsp. doylei (strain ATCC BAA-1458 / RM4099 / 269.97) protein is Large ribosomal subunit protein bL17.